Consider the following 150-residue polypeptide: SKP1-like protein 17 (150 aa).

The interval 92–150 is interaction with the F-box domain of F-box proteins; it reads LDAADYLIVIGLKNLIAQAIADYTADKTVNEIRELFNIENDYTPEEEEELRKKNEWAFN.

Belongs to the SKP1 family. Part of a SCF (SKP1-cullin-F-box) protein ligase complex. Interacts with CPR1/CPR30. In terms of tissue distribution, mainly detected in the siliques.

The protein localises to the nucleus. It functions in the pathway protein modification; protein ubiquitination. Functionally, involved in ubiquitination and subsequent proteasomal degradation of target proteins. Together with CUL1, RBX1 and a F-box protein, it forms a SCF E3 ubiquitin ligase complex. The functional specificity of this complex depends on the type of F-box protein. In the SCF complex, it serves as an adapter that links the F-box protein to CUL1. Probably implicated in incompatibility response after hybridization. This is SKP1-like protein 17 (ASK17) from Arabidopsis thaliana (Mouse-ear cress).